The following is a 361-amino-acid chain: MKRERSNILNLRMDELKEALAAINEPQWRAAQLHQWLFSHRAGSFDDMTTLSLPLRRKLAESFYIQQPVTEKHDETMEGSPAGATEKLLIQLPDGERVETVLIPGPNRMTACVSAQAGCLLGCSFCATGQMGFRRNLSSGEITGQVWALSDMLQERNREASISNIVFMGMGEPLLNTANVIEAVLNLSTRKYRFSTSQRKITISTVGITPEIDRLADTGLKTKLAVSLHSAIQEKREALMPQAARQYPLDRLRESLIGYASKTGEPVTLAYMLLKGINDSEMDAKRLIRYASGFFCKINLIDYNPIVNIKFEPVCDGTRERFRDILQDAGLQVTIRKSYGTPINAACGQLAADCTGNSDNL.

The active-site Proton acceptor is glutamate 99. Positions 105 to 342 constitute a Radical SAM core domain; that stretch reads GPNRMTACVS…VTIRKSYGTP (238 aa). Cysteine 112 and cysteine 347 are joined by a disulfide. [4Fe-4S] cluster is bound by residues cysteine 119, cysteine 123, and cysteine 126. S-adenosyl-L-methionine is bound by residues 171–172, serine 204, 227–229, and asparagine 304; these read GE and SLH. Cysteine 347 acts as the S-methylcysteine intermediate in catalysis.

This sequence belongs to the radical SAM superfamily. RlmN family. The cofactor is [4Fe-4S] cluster.

The protein resides in the cytoplasm. It carries out the reaction adenosine(2503) in 23S rRNA + 2 reduced [2Fe-2S]-[ferredoxin] + 2 S-adenosyl-L-methionine = 2-methyladenosine(2503) in 23S rRNA + 5'-deoxyadenosine + L-methionine + 2 oxidized [2Fe-2S]-[ferredoxin] + S-adenosyl-L-homocysteine. It catalyses the reaction adenosine(37) in tRNA + 2 reduced [2Fe-2S]-[ferredoxin] + 2 S-adenosyl-L-methionine = 2-methyladenosine(37) in tRNA + 5'-deoxyadenosine + L-methionine + 2 oxidized [2Fe-2S]-[ferredoxin] + S-adenosyl-L-homocysteine. In terms of biological role, specifically methylates position 2 of adenine 2503 in 23S rRNA and position 2 of adenine 37 in tRNAs. This chain is Probable dual-specificity RNA methyltransferase RlmN, found in Chlorobium luteolum (strain DSM 273 / BCRC 81028 / 2530) (Pelodictyon luteolum).